A 100-amino-acid polypeptide reads, in one-letter code: NADH-quinone oxidoreductase subunit K (100 aa).

Transmembrane regions (helical) follow at residues 4–24 (VTWY…GVLL), 29–49 (LIVM…FLAF), and 61–81 (IAFF…AVVI).

The protein belongs to the complex I subunit 4L family. In terms of assembly, NDH-1 is composed of 14 different subunits. Subunits NuoA, H, J, K, L, M, N constitute the membrane sector of the complex.

The protein localises to the cell inner membrane. It catalyses the reaction a quinone + NADH + 5 H(+)(in) = a quinol + NAD(+) + 4 H(+)(out). Its function is as follows. NDH-1 shuttles electrons from NADH, via FMN and iron-sulfur (Fe-S) centers, to quinones in the respiratory chain. The immediate electron acceptor for the enzyme in this species is believed to be ubiquinone. Couples the redox reaction to proton translocation (for every two electrons transferred, four hydrogen ions are translocated across the cytoplasmic membrane), and thus conserves the redox energy in a proton gradient. This chain is NADH-quinone oxidoreductase subunit K, found in Anaeromyxobacter sp. (strain Fw109-5).